The following is a 624-amino-acid chain: D-3-phosphoglycerate dehydrogenase 2, chloroplastic (624 aa).

The N-terminal 49 residues, 1 to 49 (MAFSSSCSSVKAVNSRWTSPSPSPSSRFAVLPAFLHRRYATSVKLTAIS), are a transit peptide targeting the chloroplast. A Phosphoserine modification is found at serine 71. NAD(+) is bound by residues 231–232 (KV), aspartate 251, 310–312 (VAR), and aspartate 336. Arginine 312 is an active-site residue. Glutamate 341 is a catalytic residue. The active-site Proton donor is the histidine 360. Position 360–363 (360–363 (HLGA)) interacts with NAD(+). The region spanning 552–624 (LILCRQVDQP…AIEEFVFLKL (73 aa)) is the ACT domain.

This sequence belongs to the D-isomer specific 2-hydroxyacid dehydrogenase family. Ubiquitous, but highly expressed in roots and in dark-grown leaf tissues. Expressed in the vasculature, stigma, anther filaments and shoot apical meristem. Not detected in the root meristem or in embryo.

The protein resides in the plastid. It is found in the chloroplast. It catalyses the reaction (2R)-3-phosphoglycerate + NAD(+) = 3-phosphooxypyruvate + NADH + H(+). The protein operates within amino-acid biosynthesis; L-serine biosynthesis; L-serine from 3-phospho-D-glycerate: step 1/3. Inhibited by 90 uM 3-phosphonooxypyruvate, but not by Ser, Thr, Val, Gly Trp, O-acetyl-L-Ser and Cys. Functionally, involved in the plastidial phosphorylated pathway of serine biosynthesis (PPSB). The protein is D-3-phosphoglycerate dehydrogenase 2, chloroplastic (PGDH2) of Arabidopsis thaliana (Mouse-ear cress).